We begin with the raw amino-acid sequence, 117 residues long: Large ribosomal subunit protein bL20 (117 aa).

Belongs to the bacterial ribosomal protein bL20 family.

Its function is as follows. Binds directly to 23S ribosomal RNA and is necessary for the in vitro assembly process of the 50S ribosomal subunit. It is not involved in the protein synthesizing functions of that subunit. This chain is Large ribosomal subunit protein bL20, found in Marinobacter nauticus (strain ATCC 700491 / DSM 11845 / VT8) (Marinobacter aquaeolei).